Consider the following 496-residue polypeptide: Legumin (496 aa).

Residues 1–21 (MAKLLALSLSFCFLLFGTCFA) form the signal peptide. 2 disulfides stabilise this stretch: cysteine 31/cysteine 64 and cysteine 107/cysteine 318. Positions 36–230 (LNALKPDNRI…ALNVNRRIVN (195 aa)) constitute a Cupin type-1 1 domain. Residues 240–311 (EKGAIVKVKG…RGGSKSQRDN (72 aa)) are disordered. The span at 257–269 (PEKEPRQKRGSRQ) shows a compositional bias: basic and acidic residues. The Cupin type-1 2 domain maps to 324 to 453 (QNIGSSSSPD…INVCQKKLLQ (130 aa)).

The protein belongs to the 11S seed storage protein (globulins) family. In terms of assembly, hexamer; each subunit is composed of an acidic and a basic chain derived from a single precursor and linked by a disulfide bond.

In terms of biological role, seed storage protein. Alpha-amylase inhibitor. The protein is Legumin of Cicer arietinum (Chickpea).